Consider the following 243-residue polypeptide: Pyridoxine 5'-phosphate synthase (243 aa).

Asn-9 provides a ligand contact to 3-amino-2-oxopropyl phosphate. 11–12 (DH) contacts 1-deoxy-D-xylulose 5-phosphate. Arg-20 contributes to the 3-amino-2-oxopropyl phosphate binding site. His-45 serves as the catalytic Proton acceptor. Residues Arg-47 and His-52 each coordinate 1-deoxy-D-xylulose 5-phosphate. The Proton acceptor role is filled by Glu-72. A 1-deoxy-D-xylulose 5-phosphate-binding site is contributed by Thr-102. His-193 serves as the catalytic Proton donor. Residues Gly-194 and 215-216 (GH) contribute to the 3-amino-2-oxopropyl phosphate site.

The protein belongs to the PNP synthase family. Homooctamer; tetramer of dimers.

The protein localises to the cytoplasm. The enzyme catalyses 3-amino-2-oxopropyl phosphate + 1-deoxy-D-xylulose 5-phosphate = pyridoxine 5'-phosphate + phosphate + 2 H2O + H(+). The protein operates within cofactor biosynthesis; pyridoxine 5'-phosphate biosynthesis; pyridoxine 5'-phosphate from D-erythrose 4-phosphate: step 5/5. Catalyzes the complicated ring closure reaction between the two acyclic compounds 1-deoxy-D-xylulose-5-phosphate (DXP) and 3-amino-2-oxopropyl phosphate (1-amino-acetone-3-phosphate or AAP) to form pyridoxine 5'-phosphate (PNP) and inorganic phosphate. The protein is Pyridoxine 5'-phosphate synthase of Yersinia pestis.